A 111-amino-acid polypeptide reads, in one-letter code: Secreted transmembrane peptide 5 (111 aa).

The N-terminal stretch at 1 to 46 (MRLSVFYIFITRLAMTKNATKNEMGSKSPNIVALVLPLLLILYTLS) is a signal peptide. The SCOOP motif motif lies at 66–79 (IVWTPHSNSCGGSP). The SxS motif essential for MIK2 binding signature appears at 72–74 (SNS). The interval 89–111 (TTGRPCRRSRPPGTNIPVSDQSP) is disordered.

The protein belongs to the serine rich endogenous peptide (SCOOP) phytocytokine family. As to quaternary structure, interacts with MIK2 (via extracellular leucine-rich repeat domain); this interaction triggers the formation of complex between MIK2 and the BAK1/SERK3 and SERK4 coreceptors, and subsequent BAK1 activation by phosphorylation. In terms of tissue distribution, mostly expressed in leaves, and, to a lower extent, in roots, stems, siliques, seeds and flowers.

The protein localises to the cell membrane. The protein resides in the secreted. It localises to the extracellular space. It is found in the apoplast. In terms of biological role, brassicaceae-specific phytocytokine (plant endogenous peptide released into the apoplast) perceived by MIK2 in a BAK1/SERK3 and SERK4 coreceptors-dependent manner, that modulates various physiological and antimicrobial processes including growth prevention and reactive oxygen species (ROS) response regulation. The chain is Secreted transmembrane peptide 5 from Arabidopsis thaliana (Mouse-ear cress).